A 560-amino-acid polypeptide reads, in one-letter code: Putative transport protein PBPRA2420 (560 aa).

5 helical membrane passes run 5-25 (VASL…AVGL), 37-57 (VGNS…GFTF), 66-86 (FMLF…GIFF), 91-111 (HYLL…LAMT), and 161-181 (SLSV…IFLA). RCK C-terminal domains follow at residues 203-292 (RGIG…FRNG) and 293-377 (KEVF…IGFI). 6 consecutive transmembrane segments (helical) span residues 386 to 406 (LLAF…TLAF), 409 to 429 (VAFG…LGFL), 452 to 472 (LMVF…DSFA), 477 to 497 (MVLV…YLFG), 506 to 526 (ALLF…DMIN), and 539 to 559 (AGTY…IIIM).

The protein belongs to the AAE transporter (TC 2.A.81) family. YbjL subfamily.

It is found in the cell membrane. This Photobacterium profundum (strain SS9) protein is Putative transport protein PBPRA2420.